A 276-amino-acid polypeptide reads, in one-letter code: MKPFSPSQTNFEKEQLCFGVYQLKDCYQQVIEALSLGIRVIDSAITYRNEKECEQAIQDFCHQNVNIKREDITLITKIPDSLQGFERTWKAVEQSLRRTGRPKLDVVLIHSPKWPVRRIESWRALLQHQKEGRINKIGVSNYNIHHLEEIISLGLPLPAINQVEFSAFNNRPTFLSYCFNHGILVQAFSPLTRGYRLSDIRLLDLSLKYNKTPANILLRYCLQKGVSPIFKASSFVHIHENVKAEQFMLDPSDMDVMDTWDEEFVSKPTWNPIILP.

Tyrosine 47 (proton donor) is an active-site residue. A substrate-binding site is contributed by histidine 110.

It belongs to the aldo/keto reductase family.

The protein localises to the cytoplasm. It is found in the nucleus. This is an uncharacterized protein from Schizosaccharomyces pombe (strain 972 / ATCC 24843) (Fission yeast).